We begin with the raw amino-acid sequence, 63 residues long: MAWLADYWWIILIILIGMLINGIKELRNVDHTRFLLNKPKLPPHRDNNDKWDNEEDDWPKKKP.

Residues 3–23 (WLADYWWIILIILIGMLINGI) form a helical membrane-spanning segment. Residues 39 to 63 (PKLPPHRDNNDKWDNEEDDWPKKKP) form a disordered region.

The protein belongs to the UPF0370 family.

The protein resides in the cell membrane. In Pectobacterium atrosepticum (strain SCRI 1043 / ATCC BAA-672) (Erwinia carotovora subsp. atroseptica), this protein is UPF0370 protein ECA1289.